A 566-amino-acid polypeptide reads, in one-letter code: Cyclin-dependent kinase-like 2 (566 aa).

One can recognise a Protein kinase domain in the interval 4–287; sequence YENLGLVGEG…CAELLHHDFF (284 aa). ATP contacts are provided by residues 10–18 and K33; that span reads VGEGSYGMV. Positions 45–51 match the [NKR]KIAxRE motif; the sequence is KKIAMRE. The Proton acceptor role is filled by D126. Disordered regions lie at residues 307–334 and 545–566; these read DARN…GEER and QVSG…EHQH. The span at 320–334 shows a compositional bias: basic and acidic residues; sequence RKKEKEKDDSLGEER.

It belongs to the protein kinase superfamily. CMGC Ser/Thr protein kinase family. CDC2/CDKX subfamily.

Its subcellular location is the cytoplasm. It localises to the nucleus. It carries out the reaction L-seryl-[protein] + ATP = O-phospho-L-seryl-[protein] + ADP + H(+). The catalysed reaction is L-threonyl-[protein] + ATP = O-phospho-L-threonyl-[protein] + ADP + H(+). The polypeptide is Cyclin-dependent kinase-like 2 (Oryctolagus cuniculus (Rabbit)).